The following is a 258-amino-acid chain: tRNA (guanine-N(1)-)-methyltransferase (258 aa).

Residues glycine 122 and 142–147 (LGDFVL) contribute to the S-adenosyl-L-methionine site.

The protein belongs to the RNA methyltransferase TrmD family. Homodimer.

It is found in the cytoplasm. The catalysed reaction is guanosine(37) in tRNA + S-adenosyl-L-methionine = N(1)-methylguanosine(37) in tRNA + S-adenosyl-L-homocysteine + H(+). Its function is as follows. Specifically methylates guanosine-37 in various tRNAs. The chain is tRNA (guanine-N(1)-)-methyltransferase from Hahella chejuensis (strain KCTC 2396).